We begin with the raw amino-acid sequence, 421 residues long: Divalent metal cation transporter MntH (421 aa).

Transmembrane regions (helical) follow at residues 27–47 (LGPAFIVSVAYVDPGNFATNI), 51–71 (SLFDYHLIWVILWSNVIAIFL), 100–120 (WFLWITAELAAMATDLAEFLG), 128–148 (LFHIPMTYAAFLTGVVTFAIV), 160–180 (GIIFGLVAVISLAYAFELFIA), 201–221 (AMLIAVGILGATVMPHVIYLH), 248–268 (ILVAMNTAFIINAAMLIVSAA), 289–309 (PLLGVFSSWAFGIALLASGFS), 337–357 (LVTMVPAITIIALGIDPLKSL), 358–378 (IVSQVVLSFELPMAIIPLLLI), and 396–416 (IMGVLVASFVMILNGLLLYLT).

The protein belongs to the NRAMP family.

The protein resides in the cell membrane. H(+)-stimulated, divalent metal cation uptake system. This is Divalent metal cation transporter MntH from Caldanaerobacter subterraneus subsp. tengcongensis (strain DSM 15242 / JCM 11007 / NBRC 100824 / MB4) (Thermoanaerobacter tengcongensis).